Consider the following 305-residue polypeptide: GMP synthase [glutamine-hydrolyzing] subunit B (305 aa).

The GMPS ATP-PPase domain occupies 2 to 185 (VETEEFIAEA…LGLEEVISER (184 aa)). 29–35 (SGGVDSS) is an ATP binding site.

As to quaternary structure, heterodimer composed of a glutamine amidotransferase subunit (A) and a GMP-binding subunit (B).

The enzyme catalyses XMP + L-glutamine + ATP + H2O = GMP + L-glutamate + AMP + diphosphate + 2 H(+). Its pathway is purine metabolism; GMP biosynthesis; GMP from XMP (L-Gln route): step 1/1. Functionally, catalyzes the synthesis of GMP from XMP. This is GMP synthase [glutamine-hydrolyzing] subunit B from Halorubrum lacusprofundi (strain ATCC 49239 / DSM 5036 / JCM 8891 / ACAM 34).